The following is a 174-amino-acid chain: Co-chaperone protein HscB homolog (174 aa).

One can recognise a J domain in the interval 2–74; it reads NYFELFSLLP…IQRAEHLLAL (73 aa).

This sequence belongs to the HscB family. In terms of assembly, interacts with HscA and stimulates its ATPase activity.

Co-chaperone involved in the maturation of iron-sulfur cluster-containing proteins. Seems to help targeting proteins to be folded toward HscA. In Shewanella pealeana (strain ATCC 700345 / ANG-SQ1), this protein is Co-chaperone protein HscB homolog.